We begin with the raw amino-acid sequence, 577 residues long: Arginine--tRNA ligase (577 aa).

The short motif at 122–132 is the 'HIGH' region element; that stretch reads PNVAKEMHVGH.

Belongs to the class-I aminoacyl-tRNA synthetase family. Monomer.

The protein localises to the cytoplasm. It catalyses the reaction tRNA(Arg) + L-arginine + ATP = L-arginyl-tRNA(Arg) + AMP + diphosphate. This chain is Arginine--tRNA ligase, found in Escherichia coli (strain ATCC 8739 / DSM 1576 / NBRC 3972 / NCIMB 8545 / WDCM 00012 / Crooks).